The primary structure comprises 231 residues: Very-long-chain (3R)-3-hydroxyacyl-CoA dehydratase 4 (231 aa).

Residues 1–19 lie on the Cytoplasmic side of the membrane; sequence MGPVALPTWLQPRYRKNAY. The helical transmembrane segment at 20–40 threads the bilayer; the sequence is LFIYYLIQFCGHSWIFTNMTV. Residues 41–56 are Lumenal-facing; it reads RFFSFGKDSMVDTFYA. The chain crosses the membrane as a helical span at residues 57–77; the sequence is IGLVMQLCQSISLLELLHIYV. At 78–112 the chain is on the cytoplasmic side; it reads GIESNHLLPRILQLTERIIVLFMVITSQEEVQEKY. Residues 113 to 133 traverse the membrane as a helical segment; the sequence is VVCVLFIFRNLLDMVRYTYSM. Over 134 to 135 the chain is Lumenal; that stretch reads LS. A helical membrane pass occupies residues 136-156; that stretch reads VIGISYAVLTWFSQTLWMPIY. Tyr156 is a catalytic residue. A topological domain (cytoplasmic) is located at residue Pro157. A helical transmembrane segment spans residues 158–178; it reads LCVLAEAFTIYQSLPYFESFG. The active site involves Glu163. At 179–189 the chain is on the lumenal side; it reads TYSTKLPFDLS. Residues 190–210 traverse the membrane as a helical segment; it reads FYFPYVLKIYLMMLFVGMYFT. The Cytoplasmic segment spans residues 211-231; the sequence is YNHLYSERRDILRVFPNKKKM.

This sequence belongs to the very long-chain fatty acids dehydratase HACD family. May interact with enzymes of the ELO family (including ELOVL1); with those enzymes that mediate condensation, the first of the four steps of the reaction cycle responsible for fatty acids elongation, may be part of a larger fatty acids elongase complex.

It is found in the endoplasmic reticulum membrane. The enzyme catalyses a very-long-chain (3R)-3-hydroxyacyl-CoA = a very-long-chain (2E)-enoyl-CoA + H2O. It catalyses the reaction (3R)-hydroxyhexadecanoyl-CoA = (2E)-hexadecenoyl-CoA + H2O. The protein operates within lipid metabolism; fatty acid biosynthesis. Catalyzes the third of the four reactions of the long-chain fatty acids elongation cycle. This endoplasmic reticulum-bound enzymatic process, allows the addition of two carbons to the chain of long- and very long-chain fatty acids/VLCFAs per cycle. This enzyme catalyzes the dehydration of the 3-hydroxyacyl-CoA intermediate into trans-2,3-enoyl-CoA, within each cycle of fatty acid elongation. Thereby, it participates in the production of VLCFAs of different chain lengths that are involved in multiple biological processes as precursors of membrane lipids and lipid mediators. The sequence is that of Very-long-chain (3R)-3-hydroxyacyl-CoA dehydratase 4 from Bos taurus (Bovine).